Reading from the N-terminus, the 340-residue chain is tRNA dimethylallyltransferase (340 aa).

The tract at residues 1–25 (MDQNRSPNGRDCREPPSPSSTARPG) is disordered. 31 to 38 (GPTATGKS) contributes to the ATP binding site. 33 to 38 (TATGKS) serves as a coordination point for substrate. Positions 56-59 (DSRQ) are interaction with substrate tRNA.

This sequence belongs to the IPP transferase family. Monomer. Mg(2+) serves as cofactor.

It catalyses the reaction adenosine(37) in tRNA + dimethylallyl diphosphate = N(6)-dimethylallyladenosine(37) in tRNA + diphosphate. In terms of biological role, catalyzes the transfer of a dimethylallyl group onto the adenine at position 37 in tRNAs that read codons beginning with uridine, leading to the formation of N6-(dimethylallyl)adenosine (i(6)A). This Synechococcus sp. (strain JA-3-3Ab) (Cyanobacteria bacterium Yellowstone A-Prime) protein is tRNA dimethylallyltransferase.